The sequence spans 587 residues: Ran GTPase-activating protein 1 (587 aa).

Ala-2 bears the N-acetylalanine mark. Lys-8 participates in a covalent cross-link: Glycyl lysine isopeptide (Lys-Gly) (interchain with G-Cter in SUMO1); alternate. Lys-8 is covalently cross-linked (Glycyl lysine isopeptide (Lys-Gly) (interchain with G-Cter in SUMO2); alternate). Lys-15 is covalently cross-linked (Glycyl lysine isopeptide (Lys-Gly) (interchain with G-Cter in SUMO2)). Position 24 is a phosphoserine (Ser-24). 4 LRR repeats span residues Phe-48–Lys-71, Gly-111–Ala-134, Ile-207–Gln-230, and Asn-235–Glu-258. Lys-279 participates in a covalent cross-link: Glycyl lysine isopeptide (Lys-Gly) (interchain with G-Cter in SUMO2). 2 LRR repeats span residues Leu-292–Asp-319 and Lys-320–Glu-343. Ser-301 carries the post-translational modification Phosphoserine. The tract at residues Leu-357–Pro-430 is disordered. Phosphoserine is present on Ser-358. The span at Ser-358 to Glu-397 shows a compositional bias: acidic residues. The span at Gln-400 to Pro-410 shows a compositional bias: polar residues. Thr-409 is modified (phosphothreonine; by CDK2). A phosphoserine mark is found at Ser-428 and Ser-435. At Thr-436 the chain carries Phosphothreonine. Ser-442 carries the phosphoserine modification. Residue Lys-452 forms a Glycyl lysine isopeptide (Lys-Gly) (interchain with G-Cter in SUMO2) linkage. Residues Leu-523 to Glu-526 carry the SUMO conjugation motif. Residue Lys-524 forms a Glycyl lysine isopeptide (Lys-Gly) (interchain with G-Cter in SUMO1); alternate linkage. Residue Lys-524 forms a Glycyl lysine isopeptide (Lys-Gly) (interchain with G-Cter in SUMO2); alternate linkage. Lys-524 carries the post-translational modification N6-acetyllysine; alternate. A Glycyl lysine isopeptide (Lys-Gly) (interchain with G-Cter in SUMO2) cross-link involves residue Lys-586.

This sequence belongs to the RNA1 family. In terms of assembly, homodimer. Interacts with RAN. Forms a complex with RANBP2/NUP358, NXF1 and NXT1. Forms a tight complex in association with RANBP2/NUP358 and UBE2I/UBC9, the ubiquitin-conjugating enzyme E2. Interacts with UBE2I; the interaction conjugates SUMO1 to RANGAP1, and subsequently stabilizes interactions of sumoylated RANGAP1 with RANBP2/NUP358. The complex composed of RANBP2, SUMO1, RANGAP1 and UBE2I associates with nuclear pore complexes. Identified in a complex composed of RAN, RANBP2, sumoylated RANGAP1, UBE2I and XPO1. Identified in a complex composed of RAN, RANGAP1 and RANBP1. Interacts with TRAF6. Interacts with SUMO1 and SENP1. Interacts (when sumoylated) with MYCBP2; interaction inhibits MYCBP2 E3 ubiquitin-protein ligase activity and promotes MYCBP2 translocation to the nucleus. In terms of processing, phosphorylation occurs before nuclear envelope breakdown and continues throughout mitosis. Phosphorylated by the M-phase kinase cyclin B/Cdk1, in vitro. Differential timimg of dephosphorylation occurs during phases of mitosis. The phosphorylated form remains associated with RANBP2/NUP358 and the SUMO E2-conjugating enzyme, UBE2I, on nuclear pore complex (NPC) diassembly and during mitosis. Sumoylated. Sumoylation is necessary for targeting to the nuclear envelope (NE), and for association with mitotic spindles and kinetochores during mitosis. Also required for interaction with RANBP2 and is mediated by UBE2I. Desumoylated by HINT1. In terms of tissue distribution, highly expressed in brain, thymus and testis.

It localises to the cytoplasm. The protein resides in the nucleus. It is found in the nucleoplasm. Its subcellular location is the nucleus envelope. The protein localises to the chromosome. It localises to the centromere. The protein resides in the kinetochore. It is found in the cytoskeleton. Its subcellular location is the spindle. Its function is as follows. GTPase activator for RAN. Converts cytoplasmic GTP-bound RAN to GDP-bound RAN, which is essential for RAN-mediated nuclear import and export. Mediates dissociation of cargo from nuclear export complexes containing XPO1, RAN and RANBP2 after nuclear export. In Homo sapiens (Human), this protein is Ran GTPase-activating protein 1 (RANGAP1).